The sequence spans 165 residues: Small ribosomal subunit protein uS5 (165 aa).

The 64-residue stretch at 10–73 (LNEKLIAVNR…EKARRNMVTV (64 aa)) folds into the S5 DRBM domain.

This sequence belongs to the universal ribosomal protein uS5 family. In terms of assembly, part of the 30S ribosomal subunit. Contacts proteins S4 and S8.

With S4 and S12 plays an important role in translational accuracy. Functionally, located at the back of the 30S subunit body where it stabilizes the conformation of the head with respect to the body. This Photobacterium profundum (strain SS9) protein is Small ribosomal subunit protein uS5.